The primary structure comprises 297 residues: N-acetylmuramic acid 6-phosphate etherase (297 aa).

Residues 55 to 218 enclose the SIS domain; it reads ATDALKSGGR…STGAMVKFGK (164 aa). Residue E83 is the Proton donor of the active site. E114 is an active-site residue.

It belongs to the GCKR-like family. MurNAc-6-P etherase subfamily. Homodimer.

It catalyses the reaction N-acetyl-D-muramate 6-phosphate + H2O = N-acetyl-D-glucosamine 6-phosphate + (R)-lactate. It participates in amino-sugar metabolism; 1,6-anhydro-N-acetylmuramate degradation. Its pathway is amino-sugar metabolism; N-acetylmuramate degradation. It functions in the pathway cell wall biogenesis; peptidoglycan recycling. Functionally, specifically catalyzes the cleavage of the D-lactyl ether substituent of MurNAc 6-phosphate, producing GlcNAc 6-phosphate and D-lactate. Together with AnmK, is also required for the utilization of anhydro-N-acetylmuramic acid (anhMurNAc) either imported from the medium or derived from its own cell wall murein, and thus plays a role in cell wall recycling. This is N-acetylmuramic acid 6-phosphate etherase from Enterobacter sp. (strain 638).